A 216-amino-acid polypeptide reads, in one-letter code: Fucoxanthin-chlorophyll a-c binding protein C, chloroplastic (216 aa).

The transit peptide at 1–38 (MKSAIMAVASAAPGLRGPSAFNGAALTTSAKSSSAMKM) directs the protein to the chloroplast. 3 helical membrane-spanning segments follow: residues 80-100 (IAMLAIAGHLTQQNARLPGML), 121-141 (IPPGGLAQIFGFIGFLELAVM), and 182-202 (GRAAQMGILALMVHEELNNKP).

It belongs to the fucoxanthin chlorophyll protein family. The LHC complex of chromophytic algae is composed of fucoxanthin, chlorophyll A and C bound non-covalently by fucoxanthin chlorophyll proteins (FCPs). The ratio of pigments in this LHC is; fucoxanthin: chlorophyll C: chlorophyll A; (0.6-1): (0.1-0.3): (1).

It localises to the plastid. The protein localises to the chloroplast thylakoid membrane. The light-harvesting complex (LHC) functions as a light receptor, it captures and delivers excitation energy to photosystems with which it is closely associated. Energy is transferred from the carotenoid and chlorophyll C (or B) to chlorophyll A and the photosynthetic reaction centers where it is used to synthesize ATP and reducing power. The protein is Fucoxanthin-chlorophyll a-c binding protein C, chloroplastic (FCPC) of Macrocystis pyrifera (Giant kelp).